The primary structure comprises 214 residues: Adenylate kinase (214 aa).

11-16 (GTGKGT) is an ATP binding site. The NMP stretch occupies residues 31-61 (SSGDLFRFYAKEEKTALAEEIKSYINNGLYV). AMP-binding positions include serine 32, arginine 37, 59–61 (LYV), 87–90 (GYPR), and glutamine 94. Residues 124-163 (LRRSCPQCKRIYNINSVDFKPKVANLCDLCKVELIHRKDD) form an LID region. Position 125 (arginine 125) interacts with ATP. Zn(2+) is bound by residues cysteine 128 and cysteine 131. Residue 134 to 135 (IY) participates in ATP binding. Zn(2+) contacts are provided by cysteine 150 and cysteine 153. AMP is bound by residues arginine 160 and arginine 171. Lysine 199 provides a ligand contact to ATP.

It belongs to the adenylate kinase family. Monomer.

The protein localises to the cytoplasm. It catalyses the reaction AMP + ATP = 2 ADP. The protein operates within purine metabolism; AMP biosynthesis via salvage pathway; AMP from ADP: step 1/1. Functionally, catalyzes the reversible transfer of the terminal phosphate group between ATP and AMP. Plays an important role in cellular energy homeostasis and in adenine nucleotide metabolism. In Mycoplasmoides gallisepticum (strain R(low / passage 15 / clone 2)) (Mycoplasma gallisepticum), this protein is Adenylate kinase.